The primary structure comprises 503 residues: Asparagine--tRNA ligase (503 aa).

Belongs to the class-II aminoacyl-tRNA synthetase family. As to quaternary structure, homodimer.

It localises to the cytoplasm. It catalyses the reaction tRNA(Asn) + L-asparagine + ATP = L-asparaginyl-tRNA(Asn) + AMP + diphosphate + H(+). In Aster yellows witches'-broom phytoplasma (strain AYWB), this protein is Asparagine--tRNA ligase.